Reading from the N-terminus, the 346-residue chain is MSKQSLVSRKNDHLDIVLDPTRAIAATGTGFGAFRFEHCALPELHLDQIDLQTALFGRRLRAPLLISSMTGGAARSAAINAHLAEAAQQLGIAMAVGSQRVALETAGDQGLTGQLRQLAPDILLLANFGAAQLVRGYGVDEARRAVEMIEGDALIVHLNPLQEAVQTGGDRDWRGVLQAIEALAARLPVPVVIKEVGAGISAAVARRLVDAGVAAIDVAGAGGTSWAAVEAARAADASQQAIAEAFADWGIPTAQALLAVRDACPNTPLIASGGIRDGVEAAKAICLGADLVGQAAGVLQAAMHSSEAVVSHFEVLIEQLRIACFCTGSADLAGLRQARLLQLSAC.

Residue 9–10 participates in substrate binding; it reads RK. FMN contacts are provided by residues serine 67, 68 to 70, serine 98, and asparagine 127; that span reads SMT. Substrate is bound at residue 98 to 100; sequence SQR. A substrate-binding site is contributed by glutamine 162. Glutamate 163 contacts Mg(2+). Residues lysine 194, threonine 224, 274-276, and 295-296 contribute to the FMN site; these read GIR and AA.

Belongs to the IPP isomerase type 2 family. Homooctamer. Dimer of tetramers. FMN is required as a cofactor. The cofactor is NADPH. It depends on Mg(2+) as a cofactor.

Its subcellular location is the cytoplasm. The catalysed reaction is isopentenyl diphosphate = dimethylallyl diphosphate. Involved in the biosynthesis of isoprenoids. Catalyzes the 1,3-allylic rearrangement of the homoallylic substrate isopentenyl (IPP) to its allylic isomer, dimethylallyl diphosphate (DMAPP). In Stutzerimonas stutzeri (strain A1501) (Pseudomonas stutzeri), this protein is Isopentenyl-diphosphate delta-isomerase.